Consider the following 132-residue polypeptide: C-X-C motif chemokine 5 (132 aa).

An N-terminal signal peptide occupies residues 1–40 (MSLQLRSSARIPSGSISPFMRMAPLAFLLLFTLPQHLAEA). Intrachain disulfides connect C53–C79 and C55–C95.

This sequence belongs to the intercrine alpha (chemokine CxC) family. As to quaternary structure, monomer. Homodimer. GCP-2(1-78) and GCP-2(9-78) are produced by proteolytic cleavage after secretion from fibroblasts and epithelial cells. GCP-2(9-78) is the most prominent form. A number of additional N-terminal (processed between pos. 41 and 48) and C-terminal (processed between pos. 118 and 132) processed forms have been identified, probably also representing intermediate states.

Its subcellular location is the secreted. May participate in the recruitment of inflammatory cells by injured or infected tissue. GCP-2(1-78) and, more potent, GCP-2(9-78) attract neutrophils and are involved in neutrophil activation. The protein is C-X-C motif chemokine 5 (Cxcl5) of Mus musculus (Mouse).